The sequence spans 874 residues: Pyruvate, phosphate dikinase (874 aa).

The N-terminal stretch occupies residues 2 to 340 (AKWVYKFEEG…LYFLQTRNGK (339 aa)). Position 92 (Arg92) interacts with ATP. Residues 340–399 (KRTAPAALQIACDLVDEGMITEEEAVVRIEAKSLDQLLHPTFNPAALKAGEVIGSALPAS) form a linker 1 region. The central stretch occupies residues 400–498 (PGAAAGKVYF…TFAEGDYISL (99 aa)). Residue Thr453 is modified to Phosphothreonine; by PDRP1. The active-site Tele-phosphohistidine intermediate is His455. The linker 2 stretch occupies residues 499–533 (DGSTGKIYKGDIETQEASVSGSFERIMVWADKFRT). Positions 534–874 (LKVRTNADTP…AAAQAALNNK (341 aa)) are C-terminal. Arg561, Arg617, Glu745, Gly766, Thr767, Asn768, and Asp769 together coordinate substrate. Glu745 is a binding site for Mg(2+). Asp769 serves as a coordination point for Mg(2+). Cys831 acts as the Proton donor in catalysis.

Belongs to the PEP-utilizing enzyme family. In terms of assembly, homodimer. It depends on Mg(2+) as a cofactor. In terms of processing, phosphorylation of Thr-453 in the dark inactivates the enzyme. Dephosphorylation upon light stimulation reactivates the enzyme.

It carries out the reaction pyruvate + phosphate + ATP = phosphoenolpyruvate + AMP + diphosphate + H(+). With respect to regulation, activated by light-induced dephosphorylation. Inhibited by dark-induced phosphorylation. Both reactions are catalyzed by PDRP1. Catalyzes the reversible phosphorylation of pyruvate and phosphate. In E.histolytica and C.symbiosus, PPDK functions in the direction of ATP synthesis. This is Pyruvate, phosphate dikinase (ppdK) from Clostridium symbiosum (Bacteroides symbiosus).